Reading from the N-terminus, the 449-residue chain is Ribulose bisphosphate carboxylase large chain (449 aa).

The propeptide occupies 1-2 (MS). Pro-3 bears the N-acetylproline mark. Lys-14 carries the post-translational modification N6,N6,N6-trimethyllysine. Substrate-binding residues include Asn-123 and Thr-173. Lys-175 acts as the Proton acceptor in catalysis. Lys-177 contributes to the substrate binding site. The Mg(2+) site is built by Lys-201, Asp-203, and Glu-204. Lys-201 bears the N6-carboxylysine mark. The active-site Proton acceptor is His-294. 3 residues coordinate substrate: Arg-295, His-327, and Ser-379.

This sequence belongs to the RuBisCO large chain family. Type I subfamily. Heterohexadecamer of 8 large chains and 8 small chains; disulfide-linked. The disulfide link is formed within the large subunit homodimers. Requires Mg(2+) as cofactor. In terms of processing, the disulfide bond which can form in the large chain dimeric partners within the hexadecamer appears to be associated with oxidative stress and protein turnover.

The protein localises to the plastid. Its subcellular location is the chloroplast. The enzyme catalyses 2 (2R)-3-phosphoglycerate + 2 H(+) = D-ribulose 1,5-bisphosphate + CO2 + H2O. It catalyses the reaction D-ribulose 1,5-bisphosphate + O2 = 2-phosphoglycolate + (2R)-3-phosphoglycerate + 2 H(+). Functionally, ruBisCO catalyzes two reactions: the carboxylation of D-ribulose 1,5-bisphosphate, the primary event in carbon dioxide fixation, as well as the oxidative fragmentation of the pentose substrate in the photorespiration process. Both reactions occur simultaneously and in competition at the same active site. In Hippocratea richardiana, this protein is Ribulose bisphosphate carboxylase large chain.